A 221-amino-acid polypeptide reads, in one-letter code: Large ribosomal subunit protein bL25 (221 aa).

The interval 192–221 is disordered; that stretch reads APRVEKEETEEDTVAPGDVPAENSKDADEE.

This sequence belongs to the bacterial ribosomal protein bL25 family. CTC subfamily. Part of the 50S ribosomal subunit; part of the 5S rRNA/L5/L18/L25 subcomplex. Contacts the 5S rRNA. Binds to the 5S rRNA independently of L5 and L18.

This is one of the proteins that binds to the 5S RNA in the ribosome where it forms part of the central protuberance. The sequence is that of Large ribosomal subunit protein bL25 from Idiomarina loihiensis (strain ATCC BAA-735 / DSM 15497 / L2-TR).